Consider the following 536-residue polypeptide: Chaperonin GroEL (536 aa).

ATP is bound by residues 30–33 (TLGP), 86–90 (DGTTT), Gly-414, and Asp-494.

Belongs to the chaperonin (HSP60) family. Forms a cylinder of 14 subunits composed of two heptameric rings stacked back-to-back. Interacts with the co-chaperonin GroES.

It localises to the cytoplasm. It catalyses the reaction ATP + H2O + a folded polypeptide = ADP + phosphate + an unfolded polypeptide.. Functionally, together with its co-chaperonin GroES, plays an essential role in assisting protein folding. The GroEL-GroES system forms a nano-cage that allows encapsulation of the non-native substrate proteins and provides a physical environment optimized to promote and accelerate protein folding. This is Chaperonin GroEL from Methanospirillum hungatei JF-1 (strain ATCC 27890 / DSM 864 / NBRC 100397 / JF-1).